Consider the following 65-residue polypeptide: VESP-VB2 (65 aa).

Residues 1–23 (MKMSILFLFALIASLACLQLTFA) form the signal peptide. 7 AXPX repeats span residues 23–26 (AAPA), 27–30 (ASPF), 31–34 (ANPG), 35–38 (ASPE), 39–42 (AAPL), 43–46 (ADPL), and 47–50 (ADPF). A propeptide spanning residues 24–49 (APAASPFANPGASPEAAPLADPLADP) is cleaved from the precursor. Leu-62 bears the Leucine amide mark.

It belongs to the MCD family. Mastoparan subfamily. In terms of tissue distribution, expressed by the venom gland.

Its subcellular location is the secreted. Antimicrobial peptide. Shows activity against both Gram-positive and -negative bacteria, as well against fungi. Also promotes important mast cell degranulation. Shows little hemolytic activity on rabbit and human erythrocytes. Its mast cell degranulation activity may be related to the activation of G-protein coupled receptors in mast cells as well as interaction with other proteins located in cell endosomal membranes in the mast cells. The chain is VESP-VB2 from Vespa bicolor (Black shield wasp).